The sequence spans 262 residues: Sulfur carrier protein FdhD (262 aa).

The Cysteine persulfide intermediate role is filled by cysteine 107.

Belongs to the FdhD family.

The protein resides in the cytoplasm. Functionally, required for formate dehydrogenase (FDH) activity. Acts as a sulfur carrier protein that transfers sulfur from IscS to the molybdenum cofactor prior to its insertion into FDH. The polypeptide is Sulfur carrier protein FdhD (Bacillus pumilus (strain SAFR-032)).